We begin with the raw amino-acid sequence, 305 residues long: tRNA dimethylallyltransferase (305 aa).

Residue 8-15 (GPTASGKT) coordinates ATP. Position 10–15 (10–15 (TASGKT)) interacts with substrate. Residues 33-36 (DSQQ) are interaction with substrate tRNA.

The protein belongs to the IPP transferase family. Monomer. Requires Mg(2+) as cofactor.

It carries out the reaction adenosine(37) in tRNA + dimethylallyl diphosphate = N(6)-dimethylallyladenosine(37) in tRNA + diphosphate. Functionally, catalyzes the transfer of a dimethylallyl group onto the adenine at position 37 in tRNAs that read codons beginning with uridine, leading to the formation of N6-(dimethylallyl)adenosine (i(6)A). The protein is tRNA dimethylallyltransferase of Anaeromyxobacter dehalogenans (strain 2CP-1 / ATCC BAA-258).